The following is a 541-amino-acid chain: Catalase (541 aa).

The disordered stretch occupies residues 1 to 20; sequence MPQTKGKPHEEQLEQYKNSQ. Active-site residues include histidine 74 and asparagine 147. Tyrosine 357 contributes to the heme binding site.

It belongs to the catalase family. Heme is required as a cofactor.

The protein localises to the peroxisome matrix. The catalysed reaction is 2 H2O2 = O2 + 2 H2O. Its function is as follows. Catalyzes the degradation of hydrogen peroxide (H(2)O(2)) generated by peroxisomal oxidases to water and oxygen, thereby protecting cells from the toxic effects of hydrogen peroxide. The sequence is that of Catalase (CAT) from Ascaris suum (Pig roundworm).